A 508-amino-acid polypeptide reads, in one-letter code: Pentatricopeptide repeat-containing protein At5g48730, chloroplastic (508 aa).

The segment covering Met1–His10 has biased composition (polar residues). The disordered stretch occupies residues Met1–Glu22. The N-terminal 28 residues, Met1–Arg28, are a transit peptide targeting the chloroplast. PPR repeat units lie at residues Asn149–Val183, Asn184–Ser214, Asp220–Pro254, Asn255–Pro290, Asp291–Pro325, Asn326–Trp360, Thr361–Pro395, Ser396–Leu430, Asp431–Pro465, and Asp466–Gln500.

Belongs to the PPR family. P subfamily.

The protein localises to the plastid. The protein resides in the chloroplast. The sequence is that of Pentatricopeptide repeat-containing protein At5g48730, chloroplastic from Arabidopsis thaliana (Mouse-ear cress).